A 261-amino-acid chain; its full sequence is Imidazole glycerol phosphate synthase subunit HisF (261 aa).

Active-site residues include Asp16 and Asp135.

This sequence belongs to the HisA/HisF family. Heterodimer of HisH and HisF.

The protein resides in the cytoplasm. The catalysed reaction is 5-[(5-phospho-1-deoxy-D-ribulos-1-ylimino)methylamino]-1-(5-phospho-beta-D-ribosyl)imidazole-4-carboxamide + L-glutamine = D-erythro-1-(imidazol-4-yl)glycerol 3-phosphate + 5-amino-1-(5-phospho-beta-D-ribosyl)imidazole-4-carboxamide + L-glutamate + H(+). It participates in amino-acid biosynthesis; L-histidine biosynthesis; L-histidine from 5-phospho-alpha-D-ribose 1-diphosphate: step 5/9. In terms of biological role, IGPS catalyzes the conversion of PRFAR and glutamine to IGP, AICAR and glutamate. The HisF subunit catalyzes the cyclization activity that produces IGP and AICAR from PRFAR using the ammonia provided by the HisH subunit. The protein is Imidazole glycerol phosphate synthase subunit HisF of Mycobacterium marinum (strain ATCC BAA-535 / M).